The following is a 90-amino-acid chain: Small ribosomal subunit protein bS16 (90 aa).

It belongs to the bacterial ribosomal protein bS16 family.

The polypeptide is Small ribosomal subunit protein bS16 (Lysinibacillus sphaericus (strain C3-41)).